A 101-amino-acid chain; its full sequence is NAD(P)H-quinone oxidoreductase subunit 4L, chloroplastic (101 aa).

Helical transmembrane passes span 2-22, 32-52, and 61-81; these read MLEH…YGLI, MCLE…SDFF, and IFSI…PAIV.

It belongs to the complex I subunit 4L family. NDH is composed of at least 16 different subunits, 5 of which are encoded in the nucleus.

The protein localises to the plastid. Its subcellular location is the chloroplast thylakoid membrane. The enzyme catalyses a plastoquinone + NADH + (n+1) H(+)(in) = a plastoquinol + NAD(+) + n H(+)(out). The catalysed reaction is a plastoquinone + NADPH + (n+1) H(+)(in) = a plastoquinol + NADP(+) + n H(+)(out). Its function is as follows. NDH shuttles electrons from NAD(P)H:plastoquinone, via FMN and iron-sulfur (Fe-S) centers, to quinones in the photosynthetic chain and possibly in a chloroplast respiratory chain. The immediate electron acceptor for the enzyme in this species is believed to be plastoquinone. Couples the redox reaction to proton translocation, and thus conserves the redox energy in a proton gradient. The chain is NAD(P)H-quinone oxidoreductase subunit 4L, chloroplastic from Lotus japonicus (Lotus corniculatus var. japonicus).